The primary structure comprises 431 residues: Serine hydroxymethyltransferase 2 (431 aa).

(6S)-5,6,7,8-tetrahydrofolate-binding positions include Leu131 and 135-137 (GHL). The residue at position 240 (Lys240) is an N6-(pyridoxal phosphate)lysine.

The protein belongs to the SHMT family. Homodimer. Pyridoxal 5'-phosphate serves as cofactor.

It localises to the cytoplasm. It catalyses the reaction (6R)-5,10-methylene-5,6,7,8-tetrahydrofolate + glycine + H2O = (6S)-5,6,7,8-tetrahydrofolate + L-serine. Its pathway is one-carbon metabolism; tetrahydrofolate interconversion. It functions in the pathway amino-acid biosynthesis; glycine biosynthesis; glycine from L-serine: step 1/1. Catalyzes the reversible interconversion of serine and glycine with tetrahydrofolate (THF) serving as the one-carbon carrier. This reaction serves as the major source of one-carbon groups required for the biosynthesis of purines, thymidylate, methionine, and other important biomolecules. Also exhibits THF-independent aldolase activity toward beta-hydroxyamino acids, producing glycine and aldehydes, via a retro-aldol mechanism. This is Serine hydroxymethyltransferase 2 from Photobacterium profundum (strain SS9).